The chain runs to 57 residues: RPSFCNLPVKPGPCNGFFSAFYYSQKKNKCHSFTYGGCKGNANRFSTIEECRRTCVG.

The 51-residue stretch at Cys5 to Cys55 folds into the BPTI/Kunitz inhibitor domain. 3 disulfide bridges follow: Cys5–Cys55, Cys14–Cys38, and Cys30–Cys51.

The protein belongs to the venom Kunitz-type family. Expressed by the venom gland.

The protein localises to the secreted. Its function is as follows. Interacts with vasopressin V2 receptor (V2R/AVPR2), probably in a selective manner. Inhibits vasopressin binding human V2R in the nanomolar range (Ki=13.3 nM), and also moderately inhibits vasopressin-induced cAMP production (IC(50)=453 nM). In vivo, intraperitoneal injection of this protein into rats increases diuresis by 4.5-fold, without any loss of electrolytes. This chain is Mambaquaretin-3, found in Dendroaspis polylepis polylepis (Black mamba).